Consider the following 150-residue polypeptide: Sulfur-rich protein, serovars L1/L3 (150 aa).

A disordered region spans residues 1-20 (MSTVPVVQGAGSSNSAQDIS). The next 2 membrane-spanning stretches (helical) occupy residues 43-63 (VGLV…VSAA) and 69-89 (IYLA…ILSM).

It is found in the membrane. The polypeptide is Sulfur-rich protein, serovars L1/L3 (srp) (Chlamydia trachomatis).